We begin with the raw amino-acid sequence, 103 residues long: Co-chaperonin GroES (103 aa).

This sequence belongs to the GroES chaperonin family. In terms of assembly, heptamer of 7 subunits arranged in a ring. Interacts with the chaperonin GroEL.

It is found in the cytoplasm. In terms of biological role, together with the chaperonin GroEL, plays an essential role in assisting protein folding. The GroEL-GroES system forms a nano-cage that allows encapsulation of the non-native substrate proteins and provides a physical environment optimized to promote and accelerate protein folding. GroES binds to the apical surface of the GroEL ring, thereby capping the opening of the GroEL channel. The protein is Co-chaperonin GroES of Crocosphaera subtropica (strain ATCC 51142 / BH68) (Cyanothece sp. (strain ATCC 51142)).